A 123-amino-acid polypeptide reads, in one-letter code: Small ribosomal subunit protein uS12cz/uS12cy (123 aa).

Belongs to the universal ribosomal protein uS12 family. As to quaternary structure, part of the 30S ribosomal subunit.

It is found in the plastid. The protein resides in the chloroplast. In terms of biological role, with S4 and S5 plays an important role in translational accuracy. Located at the interface of the 30S and 50S subunits. This chain is Small ribosomal subunit protein uS12cz/uS12cy (rps12-A), found in Phaseolus vulgaris (Kidney bean).